Consider the following 27-residue polypeptide: Equinin A (27 aa).

A compositionally biased stretch (basic and acidic residues) spans 1-13; it reads AVDKGGGKAEKKD. Residues 1-27 form a disordered region; the sequence is AVDKGGGKAEKKDGNRKKKLAGGEGGG.

The protein localises to the secreted. Functionally, peptide with unknown function. Does not show antimicrobial and hemolytic activities. This is Equinin A from Actinia equina (Beadlet anemone).